We begin with the raw amino-acid sequence, 1130 residues long: DNA-directed RNA polymerase I subunit rpa2 (1130 aa).

A C4-type zinc finger spans residues 1070 to 1096 (CKLCGSTLTIYSKKDYSNQTVSECKSC).

It belongs to the RNA polymerase beta chain family. In terms of assembly, component of the RNA polymerase I (Pol I) complex consisting of 14 subunits.

Its subcellular location is the nucleus. It localises to the nucleolus. It carries out the reaction RNA(n) + a ribonucleoside 5'-triphosphate = RNA(n+1) + diphosphate. Functionally, DNA-dependent RNA polymerase catalyzes the transcription of DNA into RNA using the four ribonucleoside triphosphates as substrates. Second largest core component of RNA polymerase I which synthesizes ribosomal RNA precursors. Proposed to contribute to the polymerase catalytic activity and forms the polymerase active center together with the largest subunit. Pol I is composed of mobile elements and RPA2 is part of the core element with the central large cleft and probably a clamp element that moves to open and close the cleft. The chain is DNA-directed RNA polymerase I subunit rpa2 (polr1b) from Dictyostelium discoideum (Social amoeba).